Here is a 273-residue protein sequence, read N- to C-terminus: Epithelial sodium channel subunit beta (273 aa).

Residues Asn1 to Asn245 are Extracellular-facing. 5 disulfides stabilise this stretch: Cys92–Cys179, Cys117–Cys175, Cys121–Cys171, Cys130–Cys157, and Cys132–Cys146. A helical transmembrane segment spans residues Val246–Glu273.

The protein belongs to the amiloride-sensitive sodium channel (TC 1.A.6) family. SCNN1B subfamily. In terms of assembly, component of the heterotrimeric epithelial sodium channel (ENaC) composed of an alpha/SCNN1A, a beta/SCNN1B and a gamma/SCNN1G subunit.

Its subcellular location is the apical cell membrane. It is found in the cytoplasmic vesicle membrane. The catalysed reaction is Na(+)(in) = Na(+)(out). With respect to regulation, originally identified and characterized by its inhibition by the diuretic drug amiloride. Functionally, this is one of the three pore-forming subunits of the heterotrimeric epithelial sodium channel (ENaC), a critical regulator of sodium balance and fluid homeostasis. ENaC operates in epithelial tissues, where it mediates the electrodiffusion of sodium ions from extracellular fluid through the apical membrane of cells, with water following osmotically. It plays a key role in maintaining sodium homeostasis through electrogenic sodium reabsorption in the kidneys. Additionally, ENaC is essential for airway surface liquid homeostasis, which is crucial for proper mucus clearance. The chain is Epithelial sodium channel subunit beta from Aquarana catesbeiana (American bullfrog).